Consider the following 281-residue polypeptide: MMLAKRILPCLDVKAGRVVKGVNFVNLRDAGDPVELAQAYNAAGADELVFLDITATHEERNILIDVVYRTADQVFIPLTVGGGIQSLTMIKDLLRAGADKVSLNSAAVRQPDLVNQASDRFGAQCIVVAIDARREPDCAPDQPRWQVYVRGGREATGLDAVAWAVEMAKRGAGELLVTSMDADGTQAGYDLELTRAIAERVEIPVIASGGAGTCEHIRAALVEGKAEAALLASLLHYGQLTIAQIKGYLHQHQVPVRQAEPLPQPAREGLGDSARRAMSSG.

Residues Asp-12 and Asp-131 contribute to the active site. Residues 256-281 (VRQAEPLPQPAREGLGDSARRAMSSG) are disordered.

It belongs to the HisA/HisF family. Heterodimer of HisH and HisF.

The protein resides in the cytoplasm. The enzyme catalyses 5-[(5-phospho-1-deoxy-D-ribulos-1-ylimino)methylamino]-1-(5-phospho-beta-D-ribosyl)imidazole-4-carboxamide + L-glutamine = D-erythro-1-(imidazol-4-yl)glycerol 3-phosphate + 5-amino-1-(5-phospho-beta-D-ribosyl)imidazole-4-carboxamide + L-glutamate + H(+). The protein operates within amino-acid biosynthesis; L-histidine biosynthesis; L-histidine from 5-phospho-alpha-D-ribose 1-diphosphate: step 5/9. Functionally, IGPS catalyzes the conversion of PRFAR and glutamine to IGP, AICAR and glutamate. The HisF subunit catalyzes the cyclization activity that produces IGP and AICAR from PRFAR using the ammonia provided by the HisH subunit. The sequence is that of Imidazole glycerol phosphate synthase subunit HisF from Thermosynechococcus vestitus (strain NIES-2133 / IAM M-273 / BP-1).